The following is a 303-amino-acid chain: MKWLQIHITVDQDQVDFTETLLMSLGAVSVTLDDAEDQALLEPLPGETPLWNKVIVTGIYQEDDNDPIDVEKLKAFLQAQLPNIPMRHEQLEDQVWERAWMDYYDPIQIGEKFWIVPEWLEPPEADATNIKLDPGLAFGTGNHASTFLCLQWLGKTDLKDKVVIDYGCGSGILAVAALLLGAQKVYATDIDPQAVLATKQNAELNNVLERLYVGLPEEFNTEFKASGSQADVLVANILASPLMMLAPEFATLIKPQGEFALAGIIEEQVDDVSEVYQQYFDILNIEKREENWCRISGKRHSQA.

The S-adenosyl-L-methionine site is built by threonine 146, glycine 167, aspartate 189, and asparagine 236.

This sequence belongs to the methyltransferase superfamily. PrmA family.

It is found in the cytoplasm. The enzyme catalyses L-lysyl-[protein] + 3 S-adenosyl-L-methionine = N(6),N(6),N(6)-trimethyl-L-lysyl-[protein] + 3 S-adenosyl-L-homocysteine + 3 H(+). In terms of biological role, methylates ribosomal protein L11. This Acinetobacter baylyi (strain ATCC 33305 / BD413 / ADP1) protein is Ribosomal protein L11 methyltransferase.